The primary structure comprises 109 residues: Putative membrane protein insertion efficiency factor (109 aa).

Belongs to the UPF0161 family.

It localises to the cell inner membrane. Its function is as follows. Could be involved in insertion of integral membrane proteins into the membrane. The protein is Putative membrane protein insertion efficiency factor of Rhodopseudomonas palustris (strain BisA53).